Here is a 316-residue protein sequence, read N- to C-terminus: PHD finger protein 20-like protein 1 (316 aa).

The 61-residue stretch at 11 to 71 folds into the Tudor 1 domain; it reads ITFEIGARLE…SNRLRPLERP (61 aa). Glycyl lysine isopeptide (Lys-Gly) (interchain with G-Cter in SUMO2) cross-links involve residues lysine 75 and lysine 79. Residues 85-141 form the Tudor 2 domain; it reads FDFKAGEEVLARWTDCRYYPAKIEAINKEGTFTVQFYDGVIRCLKRMHIKAMPEDAK. Residues 183 to 237 are disordered; the sequence is AKNKTGNKPRTSANSNKDKEKDERKWFKVPSKKEETSTSITTPEVEKKEDLPTSS. Polar residues predominate over residues 186-197; the sequence is KTGNKPRTSANS. Positions 198–218 are enriched in basic and acidic residues; the sequence is NKDKEKDERKWFKVPSKKEET.

In terms of assembly, interacts with methylated DNMT1 (DNMT1K142me1). Interacts with SOX2.

The protein localises to the nucleus. Is a negative regulator of proteasomal degradation of a set of methylated proteins, including DNMT1 and SOX2. Involved in the maintainance of embryonic stem cells pluripotency, through the regulation of SOX2 levels. This Bos taurus (Bovine) protein is PHD finger protein 20-like protein 1 (PHF20L1).